A 366-amino-acid chain; its full sequence is Phenylalanine dehydrogenase (366 aa).

NAD(+) is bound at residue arginine 45. Lysine 69 lines the L-phenylalanine pocket. The active site involves lysine 81. Residues aspartate 116, threonine 151, 181-187, 204-205, 241-242, and 262-264 each bind NAD(+); these read GVGKVGE, DI, AK, and SAN. Asparagine 264 provides a ligand contact to L-phenylalanine.

The protein belongs to the Glu/Leu/Phe/Val dehydrogenases family.

It carries out the reaction L-phenylalanine + NAD(+) + H2O = 3-phenylpyruvate + NH4(+) + NADH + H(+). It participates in amino-acid biosynthesis; L-phenylalanine biosynthesis; L-phenylalanine from phenylpyruvate (PDH route): step 1/1. Its function is as follows. Catalyzes the reversible NAD(+)-dependent oxidative deamination of L-phenylalanine to phenylpyruvate. The protein is Phenylalanine dehydrogenase of Thermoactinomyces intermedius.